The chain runs to 333 residues: Nucleoid-associated protein (333 aa).

Belongs to the YejK family.

The protein localises to the cytoplasm. The protein resides in the nucleoid. This is Nucleoid-associated protein from Metapseudomonas resinovorans (Pseudomonas resinovorans).